The primary structure comprises 232 residues: BTB/POZ domain-containing protein KCTD11 (232 aa).

Positions 1–49 (MLGAMFRAGTPMPPNLNSQGGGHYFIDRDGKAFRHILNFLRLGRLDLPR) constitute a BTB domain.

Homopentamer. Interacts with KCTD6 and KCTD21; KCTD11 and KCTD6 or KCTD21 may associate in pentameric assemblies. Component of the BCR(KCTD11) E3 ubiquitin ligase complex, at least composed of CUL3 and KCTD11 and RBX1. Interacts (via BTB domain) with CUL3; initially a 4:4 stoichiometry has been reported, however, electron microscopy revealed pentameric states of the BTB domain. In terms of tissue distribution, higher expression in cerebellum than in whole brain and lower expression in medulloblastoma.

Its pathway is protein modification; protein ubiquitination. Plays a role as a marker and a regulator of neuronal differentiation; Up-regulated by a variety of neurogenic signals, such as retinoic acid, epidermal growth factor/EGF and NGFB/nerve growth factor. Induces apoptosis, growth arrest and the expression of cyclin-dependent kinase inhibitor CDKN1B. Plays a role as a tumor repressor and inhibits cell growth and tumorigenicity of medulloblastoma (MDB). Acts as a probable substrate-specific adapter for a BCR (BTB-CUL3-RBX1) E3 ubiquitin-protein ligase complex towards HDAC1. Functions as antagonist of the Hedgehog pathway on cell proliferation and differentiation by affecting the nuclear transfer of transcription factor GLI1, thus maintaining cerebellar granule cells in undifferentiated state, this effect probably occurs via HDAC1 down-regulation, keeping GLI1 acetylated and inactive. When knock-down, Hedgehog antagonism is impaired and proliferation of granule cells is sustained. Activates the caspase cascade. The sequence is that of BTB/POZ domain-containing protein KCTD11 (KCTD11) from Homo sapiens (Human).